The chain runs to 192 residues: Putative manganese efflux pump MntP (192 aa).

Transmembrane regions (helical) follow at residues 3–23, 38–58, 61–81, 101–121, 130–150, and 167–187; these read LIFTSVLIGIGLAMDCLAVSF, FILALFFGGFQGGMTLLGWLL, GFADAIAAYDHWVAAGLLFII, VFNFVAVFILAVATSIDALAV, IVPLIPALIIGLISAIFSVGG, and ILGGVILTLIGIRILLEHLVW.

The protein belongs to the MntP (TC 9.B.29) family.

The protein localises to the cell membrane. In terms of biological role, probably functions as a manganese efflux pump. This chain is Putative manganese efflux pump MntP, found in Methanospirillum hungatei JF-1 (strain ATCC 27890 / DSM 864 / NBRC 100397 / JF-1).